A 614-amino-acid chain; its full sequence is Probable indole-3-acetic acid-amido synthetase GH3.2 (614 aa).

Belongs to the IAA-amido conjugating enzyme family. In terms of tissue distribution, expressed in roots, flowers and callus.

In terms of biological role, may catalyze the synthesis of indole-3-acetic acid (IAA)-amino acid conjugates, providing a mechanism for the plant to cope with the presence of excess auxin. This is Probable indole-3-acetic acid-amido synthetase GH3.2 (GH3.2) from Oryza sativa subsp. japonica (Rice).